We begin with the raw amino-acid sequence, 253 residues long: 3-deoxy-manno-octulosonate cytidylyltransferase (253 aa).

This sequence belongs to the KdsB family.

The protein localises to the cytoplasm. The enzyme catalyses 3-deoxy-alpha-D-manno-oct-2-ulosonate + CTP = CMP-3-deoxy-beta-D-manno-octulosonate + diphosphate. The protein operates within nucleotide-sugar biosynthesis; CMP-3-deoxy-D-manno-octulosonate biosynthesis; CMP-3-deoxy-D-manno-octulosonate from 3-deoxy-D-manno-octulosonate and CTP: step 1/1. It functions in the pathway bacterial outer membrane biogenesis; lipopolysaccharide biosynthesis. Its function is as follows. Activates KDO (a required 8-carbon sugar) for incorporation into bacterial lipopolysaccharide in Gram-negative bacteria. The polypeptide is 3-deoxy-manno-octulosonate cytidylyltransferase (Proteus mirabilis (strain HI4320)).